The chain runs to 125 residues: Small ribosomal subunit protein uS12 (125 aa).

Residue D89 is modified to 3-methylthioaspartic acid.

It belongs to the universal ribosomal protein uS12 family. In terms of assembly, part of the 30S ribosomal subunit. Contacts proteins S8 and S17. May interact with IF1 in the 30S initiation complex.

Functionally, with S4 and S5 plays an important role in translational accuracy. In terms of biological role, interacts with and stabilizes bases of the 16S rRNA that are involved in tRNA selection in the A site and with the mRNA backbone. Located at the interface of the 30S and 50S subunits, it traverses the body of the 30S subunit contacting proteins on the other side and probably holding the rRNA structure together. The combined cluster of proteins S8, S12 and S17 appears to hold together the shoulder and platform of the 30S subunit. The protein is Small ribosomal subunit protein uS12 of Cupriavidus pinatubonensis (strain JMP 134 / LMG 1197) (Cupriavidus necator (strain JMP 134)).